A 219-amino-acid chain; its full sequence is tRNA (guanine-N(7)-)-methyltransferase (219 aa).

S-adenosyl-L-methionine-binding residues include Glu-43, Asp-68, Glu-101, and Asn-124. Residues Lys-128 and Asp-160 each contribute to the substrate site.

It belongs to the class I-like SAM-binding methyltransferase superfamily. TrmB family.

The catalysed reaction is guanosine(46) in tRNA + S-adenosyl-L-methionine = N(7)-methylguanosine(46) in tRNA + S-adenosyl-L-homocysteine. It functions in the pathway tRNA modification; N(7)-methylguanine-tRNA biosynthesis. Functionally, catalyzes the formation of N(7)-methylguanine at position 46 (m7G46) in tRNA. The chain is tRNA (guanine-N(7)-)-methyltransferase from Clostridium botulinum (strain Eklund 17B / Type B).